Reading from the N-terminus, the 94-residue chain is Large ribosomal subunit protein bL27 (94 aa).

The propeptide occupies Met-1–Phe-9.

It belongs to the bacterial ribosomal protein bL27 family. Post-translationally, the N-terminus is cleaved by ribosomal processing cysteine protease Prp.

This chain is Large ribosomal subunit protein bL27, found in Staphylococcus haemolyticus (strain JCSC1435).